A 302-amino-acid polypeptide reads, in one-letter code: AP-1 complex-associated regulatory protein (302 aa).

Position 29 is a phosphoserine (Ser-29). The interaction with AP1G1 stretch occupies residues 78-138 (DSIAEKQKDL…ERQRIVQQYH (61 aa)). Positions 80 to 138 (IAEKQKDLDKKIQKELALQEEKLRLEEEALYAAQREAARAAKQRKLLEQERQRIVQQYH) form a coiled coil. The segment covering 188 to 206 (CDLMTKTKSTSGNDDSTSL) has biased composition (polar residues). Residues 188–258 (CDLMTKTKST…TSASDDSNGL (71 aa)) are disordered. The sufficient for association with the Arp2/3 complex stretch occupies residues 199–215 (GNDDSTSLDLEWEDEEG). Residues 221-233 (PMRERSKTEEDIL) show a composition bias toward basic and acidic residues. Position 226 is a phosphoserine (Ser-226). Thr-228 is modified (phosphothreonine). A compositionally biased stretch (polar residues) spans 242–255 (KKTGSNPTSASDDS).

As to quaternary structure, interacts (via coiled-coil domain) with AP1G1 (via GAE domain). Interacts with KIF5B. Associates with the Arp2/3 complex. In terms of processing, palmitoylated.

The protein resides in the golgi apparatus. The protein localises to the trans-Golgi network. It localises to the late endosome. Its subcellular location is the early endosome. In terms of biological role, necessary for adaptor protein complex 1 (AP-1)-dependent transport between the trans-Golgi network and endosomes. Regulates the membrane association of AP1G1/gamma1-adaptin, one of the subunits of the AP-1 adaptor complex. The direct interaction with AP1G1/gamma1-adaptin attenuates the release of the AP-1 complex from membranes. Regulates endosomal membrane traffic via association with AP-1 and KIF5B thus linking kinesin-based plus-end-directed microtubular transport to AP-1-dependent membrane traffic. May act as effector of AP-1 in calcium-induced endo-lysosome secretion. Inhibits Arp2/3 complex function; negatively regulates cell spreading, size and motility via intracellular sequestration of the Arp2/3 complex. In Homo sapiens (Human), this protein is AP-1 complex-associated regulatory protein (AP1AR).